The following is a 245-amino-acid chain: MSGHSKWATIKHAKGAADAKRGQLFTKFIKEISVAARMAGGDPQANPRLRTAILKARAANMPKDNIERAIKKGTGELSGSSYEELVYEGYAPGGVAVLVEVLTDNKNRAAANVRNLFSRNGGNLGSAGSVSYMFNRKGVIEYDSEQVDEEALMELALEAGAEDIQNAGGVLTVTTVPGTFETVLESLQAKGWESLSAGISMVPDTYLALDEETARKVLKMIDRLEEEEDVQAVYSNADIPSELVL.

The protein belongs to the TACO1 family.

The protein resides in the cytoplasm. The polypeptide is Probable transcriptional regulatory protein TP_0474 (Treponema pallidum (strain Nichols)).